The sequence spans 44 residues: pyr operon leader peptide (44 aa).

In Shigella flexneri, this protein is pyr operon leader peptide (pyrL).